Consider the following 332-residue polypeptide: uncharacterized protein (332 aa).

The segment at 159–256 (PLEISGRGGN…PRPHPWGPGP (98 aa)) is disordered. Pro residues predominate over residues 201–231 (RPPSPRPPSPRPPHPRPPSPRPPHPRPPSPR).

It is found in the virion. This is an uncharacterized protein from Acanthamoeba polyphaga (Amoeba).